Reading from the N-terminus, the 252-residue chain is Pyridoxine 5'-phosphate synthase (252 aa).

3-amino-2-oxopropyl phosphate is bound at residue Asn-7. Residue 9-10 (DH) participates in 1-deoxy-D-xylulose 5-phosphate binding. Arg-18 contacts 3-amino-2-oxopropyl phosphate. The active-site Proton acceptor is His-43. 1-deoxy-D-xylulose 5-phosphate contacts are provided by Arg-45 and His-50. The Proton acceptor role is filled by Glu-70. Residue Thr-100 participates in 1-deoxy-D-xylulose 5-phosphate binding. His-190 serves as the catalytic Proton donor. Residues Gly-191 and 212–213 (GH) contribute to the 3-amino-2-oxopropyl phosphate site.

It belongs to the PNP synthase family. In terms of assembly, homooctamer; tetramer of dimers.

The protein localises to the cytoplasm. The enzyme catalyses 3-amino-2-oxopropyl phosphate + 1-deoxy-D-xylulose 5-phosphate = pyridoxine 5'-phosphate + phosphate + 2 H2O + H(+). It functions in the pathway cofactor biosynthesis; pyridoxine 5'-phosphate biosynthesis; pyridoxine 5'-phosphate from D-erythrose 4-phosphate: step 5/5. Functionally, catalyzes the complicated ring closure reaction between the two acyclic compounds 1-deoxy-D-xylulose-5-phosphate (DXP) and 3-amino-2-oxopropyl phosphate (1-amino-acetone-3-phosphate or AAP) to form pyridoxine 5'-phosphate (PNP) and inorganic phosphate. The protein is Pyridoxine 5'-phosphate synthase of Synechococcus sp. (strain RCC307).